Consider the following 291-residue polypeptide: MSARIIDGNALAARVRGEIAARAAALTDRGTQPCLAVLLVGENPASAVYVRSKVAACEKAGIRSLRFDYPQDVDPAVVMEKLAALNADPSVHGILVQLPLPPQFDEAAVLEAISVAKDVDGFHAENVGRLSQNQEAFLPCTPHGVMKMLEAEGVPLAGAEAVVIGRSNIVGKPMAMLLTNAGATVTVCHSRTRDLRFHTGRADIVVAAIGKPRFVTGDMLKPGATVIDVGINRITDGPEAGKLCGDVDFASASEVAGLITPVPGGVGPMTITMLLENTVISAERSARAAGK.

Residues 165–167 (GRS), Ser190, and Ile231 each bind NADP(+).

This sequence belongs to the tetrahydrofolate dehydrogenase/cyclohydrolase family. As to quaternary structure, homodimer.

It carries out the reaction (6R)-5,10-methylene-5,6,7,8-tetrahydrofolate + NADP(+) = (6R)-5,10-methenyltetrahydrofolate + NADPH. The catalysed reaction is (6R)-5,10-methenyltetrahydrofolate + H2O = (6R)-10-formyltetrahydrofolate + H(+). The protein operates within one-carbon metabolism; tetrahydrofolate interconversion. Its function is as follows. Catalyzes the oxidation of 5,10-methylenetetrahydrofolate to 5,10-methenyltetrahydrofolate and then the hydrolysis of 5,10-methenyltetrahydrofolate to 10-formyltetrahydrofolate. In Azoarcus sp. (strain BH72), this protein is Bifunctional protein FolD.